The sequence spans 105 residues: Small ribosomal subunit protein uS10 (105 aa).

It belongs to the universal ribosomal protein uS10 family. Part of the 30S ribosomal subunit.

In terms of biological role, involved in the binding of tRNA to the ribosomes. The sequence is that of Small ribosomal subunit protein uS10 from Rickettsia conorii (strain ATCC VR-613 / Malish 7).